Consider the following 176-residue polypeptide: Flavodoxin 1 (176 aa).

A Flavodoxin-like domain is found at 4–165; it reads TGIFFGSDTG…RVEKWVKQVS (162 aa).

It belongs to the flavodoxin family. The cofactor is FMN.

In terms of biological role, low-potential electron donor to a number of redox enzymes (Potential). Involved in the reactivation of inactive cob(II)alamin in methionine synthase. The protein is Flavodoxin 1 (fldA) of Salmonella typhimurium (strain LT2 / SGSC1412 / ATCC 700720).